Consider the following 585-residue polypeptide: Arginine--tRNA ligase (585 aa).

A 'HIGH' region motif is present at residues 131-141 (ANPTGPMHVGH).

The protein belongs to the class-I aminoacyl-tRNA synthetase family. Monomer.

The protein resides in the cytoplasm. It catalyses the reaction tRNA(Arg) + L-arginine + ATP = L-arginyl-tRNA(Arg) + AMP + diphosphate. This is Arginine--tRNA ligase from Sinorhizobium medicae (strain WSM419) (Ensifer medicae).